Reading from the N-terminus, the 205-residue chain is Cytochrome c biogenesis ATP-binding export protein CcmA (205 aa).

Positions Leu2–Gly204 constitute an ABC transporter domain. Gly34 to Thr41 serves as a coordination point for ATP.

It belongs to the ABC transporter superfamily. CcmA exporter (TC 3.A.1.107) family. The complex is composed of two ATP-binding proteins (CcmA) and two transmembrane proteins (CcmB).

It is found in the cell inner membrane. It catalyses the reaction heme b(in) + ATP + H2O = heme b(out) + ADP + phosphate + H(+). In terms of biological role, part of the ABC transporter complex CcmAB involved in the biogenesis of c-type cytochromes; once thought to export heme, this seems not to be the case, but its exact role is uncertain. Responsible for energy coupling to the transport system. The polypeptide is Cytochrome c biogenesis ATP-binding export protein CcmA (Vibrio vulnificus (strain YJ016)).